A 362-amino-acid polypeptide reads, in one-letter code: O-methyltransferase 13 (362 aa).

The S-adenosyl-L-homocysteine site is built by Ser-181, Gly-205, Asp-228, Asp-248, and Lys-262. Position 228 (Asp-228) interacts with S-adenosyl-L-methionine. The active-site Proton acceptor is the His-266.

It belongs to the class I-like SAM-binding methyltransferase superfamily. Cation-independent O-methyltransferase family. As to quaternary structure, homodimer. Mainly expressed in vascular and cortical tissues.

It catalyses the reaction dopamine + S-adenosyl-L-methionine = 3-methoxytyramine + S-adenosyl-L-homocysteine + H(+). Its pathway is aromatic compound metabolism. The protein operates within alkaloid biosynthesis. O-methyltransferase participating in the biosynthesis of natural products derived from phenylethylamine, including mescaline, a natural hallucinogen potentially used in psychotherapeutic treatments. Catalyzes the O-methylation of dopamine and 4,5-dihydroxy-3-methoxyphenethylamine. The protein is O-methyltransferase 13 of Lophophora williamsii (Peyote).